Consider the following 253-residue polypeptide: Tryptophan synthase alpha chain (253 aa).

Active-site proton acceptor residues include glutamate 47 and aspartate 58.

This sequence belongs to the TrpA family. In terms of assembly, tetramer of two alpha and two beta chains.

It catalyses the reaction (1S,2R)-1-C-(indol-3-yl)glycerol 3-phosphate + L-serine = D-glyceraldehyde 3-phosphate + L-tryptophan + H2O. It participates in amino-acid biosynthesis; L-tryptophan biosynthesis; L-tryptophan from chorismate: step 5/5. In terms of biological role, the alpha subunit is responsible for the aldol cleavage of indoleglycerol phosphate to indole and glyceraldehyde 3-phosphate. In Lactococcus lactis subsp. lactis (strain IL1403) (Streptococcus lactis), this protein is Tryptophan synthase alpha chain.